A 547-amino-acid polypeptide reads, in one-letter code: MAAKEIFFHQSAREAILRGVRTLSDAVAVTLGPKGRNVVIEKSFGSPTITKDGVTVAKEIDLENKFENMGAQMVKEVASKTSDKAGDGTTTATVLARAIYEEGLKLVAAGHSPMDLKRGIDKAVEVVVGELKSLSKPTADKKAITQVGTISANGDETIGAIIADAMEKVGKEGVITVEEAKGLETTLDVVEGMQFDRGYVSPYFVTNRERMEAVLEDPYILISEKKVSSMQDMIPLLEQVARSGKPLIIIADDIEGEALATLVVNKIRGVLNVCAVKAPGFGDRRKEMLQDIAVLTGGTVVSEDLGHKFETLTLTDLGRAKRVTVDKDNTTVVDGVGTKAAIEGRIKLIRTQIDSVTSDYDREKLQERLAKLVGGVAVINVGAATETEMKEKKARVEDALHATRAAVEEGIVPGGGVAYLRALPALEKLKPGGEQDFGVAIIRRALQEPLRKIASNAGVEGAVVINKVREGTGAFGYNARTEVYEDLEKAGVIDPTKVERTALQNAASVASLLLTTEAMVAERPKGKAKGGGAGAGMPDYGGDDMDY.

Residues 30 to 33 (TLGP), Lys51, 87 to 91 (DGTTT), Gly415, and Asp494 each bind ATP. The disordered stretch occupies residues 524 to 547 (PKGKAKGGGAGAGMPDYGGDDMDY).

It belongs to the chaperonin (HSP60) family. Forms a cylinder of 14 subunits composed of two heptameric rings stacked back-to-back. Interacts with the co-chaperonin GroES.

The protein localises to the cytoplasm. It catalyses the reaction ATP + H2O + a folded polypeptide = ADP + phosphate + an unfolded polypeptide.. In terms of biological role, together with its co-chaperonin GroES, plays an essential role in assisting protein folding. The GroEL-GroES system forms a nano-cage that allows encapsulation of the non-native substrate proteins and provides a physical environment optimized to promote and accelerate protein folding. In Myxococcus xanthus (strain DK1622), this protein is Chaperonin GroEL 1.